The following is a 75-amino-acid chain: Dermaseptin-A3 (75 aa).

Positions 1 to 22 are cleaved as a signal peptide; it reads MAFLKKSLFLVLLLGLISLSIC. A propeptide spanning residues 23–43 is cleaved from the precursor; the sequence is EEEKRENEVEEEQEDDEQSEL. At Q72 the chain carries Glutamine amide. Residues 74–75 constitute a propeptide that is removed on maturation; the sequence is EQ.

The protein belongs to the frog skin active peptide (FSAP) family. Dermaseptin subfamily. As to expression, expressed by the skin glands.

It is found in the secreted. In terms of biological role, possesses a potent antimicrobial activity against Gram-positive and Gram-negative bacteria. Probably acts by disturbing membrane functions with its amphipathic structure. This chain is Dermaseptin-A3, found in Agalychnis annae (Blue-sided leaf frog).